An 87-amino-acid chain; its full sequence is RNA-binding protein Hfq (87 aa).

The region spanning 9 to 68 (DPFLNALRRERIPVSIYLVNGIKLQGQIESFDQFVILLKNTVSQMVYKHAISTVVPARAV) is the Sm domain.

This sequence belongs to the Hfq family. Homohexamer.

Its function is as follows. RNA chaperone that binds small regulatory RNA (sRNAs) and mRNAs to facilitate mRNA translational regulation in response to envelope stress, environmental stress and changes in metabolite concentrations. Also binds with high specificity to tRNAs. This Aeromonas salmonicida (strain A449) protein is RNA-binding protein Hfq.